A 570-amino-acid chain; its full sequence is Probable D-xylulose kinase A (570 aa).

Positions 95, 166, 282, and 283 each coordinate substrate. Residues Trp364, 469-470 (GG), and Asn473 each bind ATP.

It belongs to the FGGY kinase family.

It is found in the cytoplasm. It catalyses the reaction D-xylulose + ATP = D-xylulose 5-phosphate + ADP + H(+). Highly specific D-xylulose kinase which participates in the catabolism of xylose. Xylose is a major component of hemicelluloses such as xylan. Most fungi utilize D-xylose via three enzymatic reactions, xylose reductase (XR), xylitol dehydrogenase (XDH), and xylulokinase, to form xylulose 5-phosphate, which enters pentose phosphate pathway. The sequence is that of Probable D-xylulose kinase A (xkiA) from Aspergillus niger (strain ATCC MYA-4892 / CBS 513.88 / FGSC A1513).